The chain runs to 647 residues: Threonine--tRNA ligase (647 aa).

In terms of domain architecture, TGS spans 1-61 (MINITFPDGA…TEDGSIEIVT (61 aa)). The tract at residues 242 to 540 (DHRKLGKELD…LIENYKGAFP (299 aa)) is catalytic. C336, H387, and H517 together coordinate Zn(2+).

This sequence belongs to the class-II aminoacyl-tRNA synthetase family. Homodimer. Zn(2+) is required as a cofactor.

The protein localises to the cytoplasm. The enzyme catalyses tRNA(Thr) + L-threonine + ATP = L-threonyl-tRNA(Thr) + AMP + diphosphate + H(+). In terms of biological role, catalyzes the attachment of threonine to tRNA(Thr) in a two-step reaction: L-threonine is first activated by ATP to form Thr-AMP and then transferred to the acceptor end of tRNA(Thr). Also edits incorrectly charged L-seryl-tRNA(Thr). This chain is Threonine--tRNA ligase, found in Streptococcus pneumoniae serotype 4 (strain ATCC BAA-334 / TIGR4).